Reading from the N-terminus, the 359-residue chain is Guanine nucleotide-binding protein-like alpha-11 subunit (359 aa).

The N-myristoyl glycine moiety is linked to residue G2. Residues 29–359 enclose the G-alpha domain; that stretch reads KLIKILMMGN…YVKKILEDTI (331 aa). The interval 32-45 is G1 motif; that stretch reads KILMMGNENSAKST. S44 is a Mg(2+) binding site. The G2 motif stretch occupies residues 176–185; sequence DIIRCSKNNQ. GTP-binding positions include 178–185, 204–208, and 281–284; these read IRCSKNNQ, DTGNQ, and NKKE. Residues 200–209 form a G3 motif region; sequence FVFVDTGNQK. The segment at 277-284 is G4 motif; sequence IVLFNKKE. Residues 337–342 are G5 motif; the sequence is FNSSDT.

Belongs to the G-alpha family.

This chain is Guanine nucleotide-binding protein-like alpha-11 subunit (gpaK), found in Dictyostelium discoideum (Social amoeba).